We begin with the raw amino-acid sequence, 286 residues long: NAD kinase (286 aa).

Asp-74 (proton acceptor) is an active-site residue. Residues 74–75 (DG), 148–149 (ND), Asp-178, Ala-186, 189–194 (TAYNLS), and Gln-244 each bind NAD(+).

The protein belongs to the NAD kinase family. The cofactor is a divalent metal cation.

It localises to the cytoplasm. The catalysed reaction is NAD(+) + ATP = ADP + NADP(+) + H(+). Involved in the regulation of the intracellular balance of NAD and NADP, and is a key enzyme in the biosynthesis of NADP. Catalyzes specifically the phosphorylation on 2'-hydroxyl of the adenosine moiety of NAD to yield NADP. The polypeptide is NAD kinase (Campylobacter jejuni subsp. jejuni serotype O:23/36 (strain 81-176)).